The primary structure comprises 525 residues: Mitoguardin (525 aa).

The chain crosses the membrane as a helical span at residues 26–45 (VVLFSLTAGVALMSVLSRFL). The segment covering 47-67 (RRKPPRPPRRARKYTGRRNRN) has biased composition (basic residues). 2 disordered regions span residues 47–73 (RRKP…RSPN) and 210–239 (DEAE…GSDP). A compositionally biased stretch (acidic residues) spans 211-220 (EAEEEAGEAD).

It belongs to the mitoguardin family. Interacts with zuc.

It is found in the mitochondrion outer membrane. In terms of biological role, regulator of mitochondrial fusion required to maintain neuronal homeostasis. The polypeptide is Mitoguardin (Drosophila melanogaster (Fruit fly)).